The chain runs to 48 residues: Glycine-rich RNA-binding protein 3 (48 aa).

The sequence is that of Glycine-rich RNA-binding protein 3 from Populus euphratica (Euphrates poplar).